A 312-amino-acid polypeptide reads, in one-letter code: HPr kinase/phosphorylase (312 aa).

Catalysis depends on residues H141 and K162. Residue G156 to S163 coordinates ATP. S163 lines the Mg(2+) pocket. Residue D180 is the Proton acceptor; for phosphorylation activity. Proton donor; for dephosphorylation activity of the active site. The segment at L204 to D213 is important for the catalytic mechanism of both phosphorylation and dephosphorylation. E205 is a Mg(2+) binding site. R246 is an active-site residue. The interval P267–R272 is important for the catalytic mechanism of dephosphorylation.

This sequence belongs to the HPrK/P family. In terms of assembly, homohexamer. It depends on Mg(2+) as a cofactor.

The catalysed reaction is [HPr protein]-L-serine + ATP = [HPr protein]-O-phospho-L-serine + ADP + H(+). It catalyses the reaction [HPr protein]-O-phospho-L-serine + phosphate + H(+) = [HPr protein]-L-serine + diphosphate. In terms of biological role, catalyzes the ATP- as well as the pyrophosphate-dependent phosphorylation of a specific serine residue in HPr, a phosphocarrier protein of the phosphoenolpyruvate-dependent sugar phosphotransferase system (PTS). HprK/P also catalyzes the pyrophosphate-producing, inorganic phosphate-dependent dephosphorylation (phosphorolysis) of seryl-phosphorylated HPr (P-Ser-HPr). The two antagonistic activities of HprK/P are regulated by several intracellular metabolites, which change their concentration in response to the absence or presence of rapidly metabolisable carbon sources (glucose, fructose, etc.) in the growth medium. Therefore, by controlling the phosphorylation state of HPr, HPrK/P is a sensor enzyme that plays a major role in the regulation of carbon metabolism and sugar transport: it mediates carbon catabolite repression (CCR), and regulates PTS-catalyzed carbohydrate uptake and inducer exclusion. The polypeptide is HPr kinase/phosphorylase (Pediococcus pentosaceus (strain ATCC 25745 / CCUG 21536 / LMG 10740 / 183-1w)).